We begin with the raw amino-acid sequence, 372 residues long: Dof zinc finger protein DOF5.6 (372 aa).

The Dof-type zinc finger occupies 73-127 (QKCPRCESTHTKFCYYNNYSLSQPRYFCKTCRRYWTKGGTLRNIPVGGGCRKNKK). Residues Cys-75, Cys-78, Cys-100, and Cys-103 each coordinate Zn(2+). The segment at 117–146 (PVGGGCRKNKKPSSSNSSSSTSSGKKPSNI) is disordered. Residues 128–145 (PSSSNSSSSTSSGKKPSN) show a composition bias toward low complexity.

The PEAR proteins (e.g. DOF2.4, DOF5.1, DOF3.2, DOF1.1, DOF5.6 and DOF5.3) form a short-range concentration gradient that peaks at protophloem sieve elements (PSE). Preferentially expressed in the vasculature of all organs, including seedlings, roots, stems, buds, leaves, flowers and siliques, and particularly in the cambium, phloem and interfascicular parenchyma cells of inflorescence stems.

Its subcellular location is the nucleus. Its function is as follows. Transcription factor that binds specifically to a 5'-AA[AG]G-3' consensus core sequence. Promotes expression. The PEAR proteins (e.g. DOF2.4, DOF5.1, DOF3.2, DOF1.1, DOF5.6 and DOF5.3) activate gene expression that promotes radial growth of protophloem sieve elements. Involved in the regulation of interfascicular cambium formation and vascular tissue development, particularly at a very early stage during inflorescence stem development; promotes both cambium activity and phloem specification, but prevents xylem specification. The protein is Dof zinc finger protein DOF5.6 of Arabidopsis thaliana (Mouse-ear cress).